A 583-amino-acid polypeptide reads, in one-letter code: SHC-transforming protein 1 (583 aa).

Residue methionine 1 is modified to N-acetylmethionine. The interval 1 to 92 (MDLLPPKPKY…EPGRAADDGE (92 aa)) is disordered. The segment covering 16-44 (ESLSSLEEGASGSTPPEELPSPSASSLGP) has biased composition (low complexity). Serine 36 and serine 139 each carry phosphoserine. Lysine 154 is modified (N6-acetyllysine). The PID domain maps to 156–339 (MGPGVSYLVR…AGFDGSAWDE (184 aa)). The CH1 stretch occupies residues 340–487 (EEEEPPDHQY…SMAEQLRGEP (148 aa)). 2 positions are modified to phosphotyrosine: tyrosine 349 and tyrosine 350. A compositionally biased stretch (low complexity) spans 372-384 (AAPGAARPTAPNA). The tract at residues 372 to 415 (AAPGAARPTAPNAQTPSHLGATLPVGQPVGGDPEVRKQMPPPPP) is disordered. Tyrosine 427 carries the phosphotyrosine modification. Serine 453 is modified (phosphoserine). The SH2 domain occupies 488–579 (WFHGKLSRRE…GSELCLQQPV (92 aa)).

As to quaternary structure, interacts with CPNE3; this interaction may mediate the binding of CPNE3 with ERBB2. Interacts with the NPXY motif of tyrosine-phosphorylated IGF1R and INSR in vitro via the PID domain. Once activated, binds to GRB2. Interacts with tyrosine-phosphorylated CD3T and DDR2. Interacts with the N-terminal region of SH2B2. Interacts with phosphorylated LRP1 and IRS4. Interacts with INPP5D/SHIP1 and INPPL1/SHIP2. Interacts with TRIM31. Interacts with PTPN6/SHP (tyrosine phosphorylated). Identified in a complex containing FGFR4, NCAM1, CDH2, PLCG1, FRS2, SRC, SHC1, GAP43 and CTT. Interacts with ALK, GAB2, GRB7 and KIT. Interacts with FLT4 (tyrosine-phosphorylated). Interacts with EPHB1 and GRB2; activates the MAPK/ERK cascade to regulate cell migration. Interacts with PDGFRB (tyrosine-phosphorylated). Interacts with ERBB4. Interacts with TEK/TIE2 (tyrosine-phosphorylated). Interacts with the Trk receptors NTRK1, NTRK2 and NTRK3; in a phosphotyrosine-dependent manner. Interacts with PTK2/FAK1. Interacts with CEACAM1; this interaction is CEACAM1-phosphorylation-dependent and mediates interaction with EGFR or INSR resulting in decrease coupling of SHC1 to the MAPK3/ERK1-MAPK1/ERK2 pathway. Interacts (via PID domain) with PEAK1 (when phosphorylated at 'Tyr-1188'). Found in a complex with PPP1CA, PPP1CC, SHC1 and PEAK1. In terms of assembly, (Microbial infection) Interacts with herpes simplex virus 1 UL46. In terms of processing, phosphorylated by activated epidermal growth factor receptor. Phosphorylated in response to FLT4 and KIT signaling. Isoform p46Shc and isoform p52Shc are phosphorylated on tyrosine residues of the Pro-rich domain. Isoform p66Shc is phosphorylated on Ser-36 by PRKCB upon treatment with insulin, hydrogen peroxide or irradiation with ultraviolet light. Tyrosine phosphorylated in response to FLT3 signaling. Tyrosine phosphorylated by activated PTK2B/PYK2. Tyrosine phosphorylated by ligand-activated ALK. Tyrosine phosphorylated by ligand-activated PDGFRB. Tyrosine phosphorylated by TEK/TIE2. May be tyrosine phosphorylated by activated PTK2/FAK1; tyrosine phosphorylation was seen in an astrocytoma biopsy, where PTK2/FAK1 kinase activity is high, but not in normal brain tissue. Isoform p52Shc dephosphorylation by PTPN2 may regulate interaction with GRB2. Widely expressed. Expressed in neural stem cells but absent in mature neurons.

It localises to the cytoplasm. The protein resides in the cell junction. It is found in the focal adhesion. The protein localises to the mitochondrion matrix. Its subcellular location is the mitochondrion. Its function is as follows. Signaling adapter that couples activated growth factor receptors to signaling pathways. Participates in a signaling cascade initiated by activated KIT and KITLG/SCF. Isoform p46Shc and isoform p52Shc, once phosphorylated, couple activated receptor tyrosine kinases to Ras via the recruitment of the GRB2/SOS complex and are implicated in the cytoplasmic propagation of mitogenic signals. Isoform p46Shc and isoform p52Shc may thus function as initiators of the Ras signaling cascade in various non-neuronal systems. Isoform p66Shc does not mediate Ras activation, but is involved in signal transduction pathways that regulate the cellular response to oxidative stress and life span. Isoform p66Shc acts as a downstream target of the tumor suppressor p53 and is indispensable for the ability of stress-activated p53 to induce elevation of intracellular oxidants, cytochrome c release and apoptosis. The expression of isoform p66Shc has been correlated with life span. Participates in signaling downstream of the angiopoietin receptor TEK/TIE2, and plays a role in the regulation of endothelial cell migration and sprouting angiogenesis. The polypeptide is SHC-transforming protein 1 (SHC1) (Homo sapiens (Human)).